A 496-amino-acid polypeptide reads, in one-letter code: Probable CtpA-like serine protease (496 aa).

The segment at 1–26 (MRKCFFMSHNPEEKQSNLDSNHKNES) is disordered. Residues 10 to 25 (NPEEKQSNLDSNHKNE) show a composition bias toward basic and acidic residues. Residues 39–59 (FILLLLGVVIITAGITVAATI) form a helical membrane-spanning segment. Positions 124 to 206 (TKSFNEDVSG…TTVKLTIKRG (83 aa)) constitute a PDZ domain. Catalysis depends on charge relay system residues Ser329, Asp340, and Lys354.

This sequence belongs to the peptidase S41A family.

It localises to the cell membrane. The sequence is that of Probable CtpA-like serine protease from Staphylococcus haemolyticus (strain JCSC1435).